The sequence spans 686 residues: Methionine--tRNA ligase (686 aa).

The 'HIGH' region motif lies at P15–H25. Zn(2+)-binding residues include C146, C149, C159, and C162. A 'KMSKS' region motif is present at residues K332–S336. K335 lines the ATP pocket. A tRNA-binding domain is found at A585–M686.

This sequence belongs to the class-I aminoacyl-tRNA synthetase family. MetG type 1 subfamily. In terms of assembly, homodimer. Zn(2+) serves as cofactor.

It localises to the cytoplasm. It catalyses the reaction tRNA(Met) + L-methionine + ATP = L-methionyl-tRNA(Met) + AMP + diphosphate. Functionally, is required not only for elongation of protein synthesis but also for the initiation of all mRNA translation through initiator tRNA(fMet) aminoacylation. The polypeptide is Methionine--tRNA ligase (Aliivibrio fischeri (strain ATCC 700601 / ES114) (Vibrio fischeri)).